Here is a 258-residue protein sequence, read N- to C-terminus: Small ribosomal subunit protein uS2 (258 aa).

The protein belongs to the universal ribosomal protein uS2 family.

In Leuconostoc citreum (strain KM20), this protein is Small ribosomal subunit protein uS2.